An 822-amino-acid polypeptide reads, in one-letter code: Phenylalanine--tRNA ligase beta subunit (822 aa).

Residues 44-162 (LSKNTNLVVG…DQIALGSNAL (119 aa)) enclose the tRNA-binding domain. The tract at residues 201–224 (QSSNNNQETKSTNYKTKNSEDQTN) is disordered. Positions 430-513 (RTNPTISLNL…RLYGCHKLPP (84 aa)) constitute a B5 domain. 3 residues coordinate Mg(2+): D491, D497, and D501. One can recognise an FDX-ACB domain in the interval 730 to 822 (PKFPTVIRDL…LIKHFHIEIR (93 aa)).

This sequence belongs to the phenylalanyl-tRNA synthetase beta subunit family. Type 1 subfamily. As to quaternary structure, tetramer of two alpha and two beta subunits. Mg(2+) is required as a cofactor.

Its subcellular location is the cytoplasm. It carries out the reaction tRNA(Phe) + L-phenylalanine + ATP = L-phenylalanyl-tRNA(Phe) + AMP + diphosphate + H(+). This is Phenylalanine--tRNA ligase beta subunit from Onion yellows phytoplasma (strain OY-M).